Reading from the N-terminus, the 303-residue chain is Crk-like protein (303 aa).

The 89-residue stretch at 14–102 folds into the SH2 domain; that stretch reads WYMGPVTRQE…LDTTTLIEPA (89 aa). One can recognise an SH3 1 domain in the interval 123-183; sequence ENLEYVRTLY…PVPYVEKLVR (61 aa). Tyr-127 is subject to Phosphotyrosine. The disordered stretch occupies residues 184–203; sequence SSPHGKHGNRNSNSYGIPEP. Tyr-207 is modified (phosphotyrosine). Positions 235–296 constitute an SH3 2 domain; sequence NGPVFAKAIQ…PFTHVKIFDP (62 aa).

Belongs to the CRK family. As to quaternary structure, interacts with DOCK2 and EPOR. Interacts with phosphorylated CBLB and IRS4. Interacts with INPP5D/SHIP1. Interacts with BCAR1/CAS and NEDD9/HEF1. Phosphorylated on tyrosine. Phosphorylation is prominent during early development, but decreases at later embryonic stages and in newborn mice.

Its function is as follows. May mediate the transduction of intracellular signals. In Mus musculus (Mouse), this protein is Crk-like protein (Crkl).